The primary structure comprises 359 residues: Pyruvate dehydrogenase E1 component subunit beta, mitochondrial (359 aa).

A mitochondrion-targeting transit peptide spans 1–30; that stretch reads MAAVAGLVRGPLRQASGLLKRRFHRSAPAA. The residue at position 67 (tyrosine 67) is a Phosphotyrosine. Glutamate 89 is a thiamine diphosphate binding site. Positions 142, 190, 191, 193, and 195 each coordinate K(+). Lysine 354 carries the post-translational modification N6-acetyllysine.

In terms of assembly, heterotetramer of two PDHA1 and two PDHB subunits. The heterotetramer interacts with DLAT, and is part of the multimeric pyruvate dehydrogenase complex that contains multiple copies of pyruvate dehydrogenase (E1), dihydrolipoamide acetyltransferase (DLAT, E2) and lipoamide dehydrogenase (DLD, E3). These subunits are bound to an inner core composed of about 48 DLAT and 12 PDHX molecules. Interacts with DLAT. Thiamine diphosphate is required as a cofactor.

The protein localises to the mitochondrion matrix. It catalyses the reaction N(6)-[(R)-lipoyl]-L-lysyl-[protein] + pyruvate + H(+) = N(6)-[(R)-S(8)-acetyldihydrolipoyl]-L-lysyl-[protein] + CO2. Functionally, the pyruvate dehydrogenase complex catalyzes the overall conversion of pyruvate to acetyl-CoA and CO(2), and thereby links the glycolytic pathway to the tricarboxylic cycle. The protein is Pyruvate dehydrogenase E1 component subunit beta, mitochondrial (Pdhb) of Rattus norvegicus (Rat).